Reading from the N-terminus, the 353-residue chain is Photosystem II protein D1 (353 aa).

Position 2 is an N-acetylthreonine (Thr2). The residue at position 2 (Thr2) is a Phosphothreonine. 3 helical membrane passes run 29 to 46 (YIGWFGVLMIPTLLTATS), 118 to 133 (HFLLGVACYMGREWEL), and 142 to 156 (WIAVAYSAPVAAATA). His118 provides a ligand contact to chlorophyll a. A pheophytin a-binding site is contributed by Tyr126. [CaMn4O5] cluster is bound by residues Asp170 and Glu189. A helical membrane pass occupies residues 197–218 (FHMLGVAGVFGGSLFSAMHGSL). Position 198 (His198) interacts with chlorophyll a. A quinone-binding positions include His215 and 264–265 (SF). Fe cation is bound at residue His215. Residue His272 coordinates Fe cation. The chain crosses the membrane as a helical span at residues 274 to 288 (FLAAWPVVGIWFTAL). Residues His332, Glu333, Asp342, and Ala344 each contribute to the [CaMn4O5] cluster site. A propeptide spanning residues 345-353 (AIEAPATNG) is cleaved from the precursor.

It belongs to the reaction center PufL/M/PsbA/D family. PSII is composed of 1 copy each of membrane proteins PsbA, PsbB, PsbC, PsbD, PsbE, PsbF, PsbH, PsbI, PsbJ, PsbK, PsbL, PsbM, PsbT, PsbX, PsbY, PsbZ, Psb30/Ycf12, at least 3 peripheral proteins of the oxygen-evolving complex and a large number of cofactors. It forms dimeric complexes. The cofactor is The D1/D2 heterodimer binds P680, chlorophylls that are the primary electron donor of PSII, and subsequent electron acceptors. It shares a non-heme iron and each subunit binds pheophytin, quinone, additional chlorophylls, carotenoids and lipids. D1 provides most of the ligands for the Mn4-Ca-O5 cluster of the oxygen-evolving complex (OEC). There is also a Cl(-1) ion associated with D1 and D2, which is required for oxygen evolution. The PSII complex binds additional chlorophylls, carotenoids and specific lipids.. Tyr-161 forms a radical intermediate that is referred to as redox-active TyrZ, YZ or Y-Z. In terms of processing, C-terminally processed by CTPA; processing is essential to allow assembly of the oxygen-evolving complex and thus photosynthetic growth.

It is found in the plastid membrane. The catalysed reaction is 2 a plastoquinone + 4 hnu + 2 H2O = 2 a plastoquinol + O2. Its function is as follows. Photosystem II (PSII) is a light-driven water:plastoquinone oxidoreductase that uses light energy to abstract electrons from H(2)O, generating O(2) and a proton gradient subsequently used for ATP formation. It consists of a core antenna complex that captures photons, and an electron transfer chain that converts photonic excitation into a charge separation. The D1/D2 (PsbA/PsbD) reaction center heterodimer binds P680, the primary electron donor of PSII as well as several subsequent electron acceptors. This Cuscuta exaltata (Tall dodder) protein is Photosystem II protein D1.